A 395-amino-acid polypeptide reads, in one-letter code: uncharacterized protein (395 aa).

Transmembrane regions (helical) follow at residues 19–39 (IGIA…IAII), 49–69 (VLLI…IYEL), 87–107 (LTWI…AVGG), 137–157 (LVII…PLGT), 172–192 (YINL…FYLI), 206–226 (TINI…SLIA), 252–272 (LIGG…MGMG), 279–299 (LFIM…KILA), 311–331 (GLVF…GSLI), and 359–379 (VLCT…GAVI).

It belongs to the chloride channel (TC 2.A.49) family.

The protein resides in the cell membrane. This is an uncharacterized protein from Methanocaldococcus jannaschii (strain ATCC 43067 / DSM 2661 / JAL-1 / JCM 10045 / NBRC 100440) (Methanococcus jannaschii).